Reading from the N-terminus, the 344-residue chain is Methionine import ATP-binding protein MetN 1 (344 aa).

In terms of domain architecture, ABC transporter spans 2–241; the sequence is IEIRNISQRF…PHHEVTRALI (240 aa). Position 38–45 (38–45) interacts with ATP; it reads GRSGAGKS.

This sequence belongs to the ABC transporter superfamily. Methionine importer (TC 3.A.1.24) family. In terms of assembly, the complex is composed of two ATP-binding proteins (MetN), two transmembrane proteins (MetI) and a solute-binding protein (MetQ).

It localises to the cell inner membrane. The enzyme catalyses L-methionine(out) + ATP + H2O = L-methionine(in) + ADP + phosphate + H(+). It carries out the reaction D-methionine(out) + ATP + H2O = D-methionine(in) + ADP + phosphate + H(+). Part of the ABC transporter complex MetNIQ involved in methionine import. Responsible for energy coupling to the transport system. The protein is Methionine import ATP-binding protein MetN 1 of Paraburkholderia xenovorans (strain LB400).